The primary structure comprises 500 residues: Cobyric acid synthase (500 aa).

The 199-residue stretch at 251 to 449 (KLNIVIPIMP…LHGVFDHPDA (199 aa)) folds into the GATase cobBQ-type domain. Catalysis depends on Cys332, which acts as the Nucleophile. His441 is a catalytic residue.

The protein belongs to the CobB/CobQ family. CobQ subfamily.

It functions in the pathway cofactor biosynthesis; adenosylcobalamin biosynthesis. Catalyzes amidations at positions B, D, E, and G on adenosylcobyrinic A,C-diamide. NH(2) groups are provided by glutamine, and one molecule of ATP is hydrogenolyzed for each amidation. In Marinomonas sp. (strain MWYL1), this protein is Cobyric acid synthase.